Reading from the N-terminus, the 112-residue chain is UPF0145 protein CD630_17110 (112 aa).

This sequence belongs to the UPF0145 family.

In Clostridioides difficile (strain 630) (Peptoclostridium difficile), this protein is UPF0145 protein CD630_17110.